Consider the following 232-residue polypeptide: Large ribosomal subunit protein uL1 (232 aa).

Belongs to the universal ribosomal protein uL1 family. In terms of assembly, part of the 50S ribosomal subunit.

Binds directly to 23S rRNA. The L1 stalk is quite mobile in the ribosome, and is involved in E site tRNA release. Functionally, protein L1 is also a translational repressor protein, it controls the translation of the L11 operon by binding to its mRNA. The chain is Large ribosomal subunit protein uL1 from Burkholderia lata (strain ATCC 17760 / DSM 23089 / LMG 22485 / NCIMB 9086 / R18194 / 383).